Here is a 358-residue protein sequence, read N- to C-terminus: Phospho-N-acetylmuramoyl-pentapeptide-transferase (358 aa).

10 consecutive transmembrane segments (helical) span residues 28-48 (WALA…IAWL), 72-92 (TMGG…WADL), 96-116 (YIWL…LDDY), 133-153 (FLWQ…LPAY), 164-184 (GLTP…MVGS), 196-216 (GLAI…IYVA), 233-253 (VGEV…FLWF), 260-280 (VFMG…LAVL), 285-305 (LLLL…ILQV), and 335-355 (KIII…LSVL).

Belongs to the glycosyltransferase 4 family. MraY subfamily. It depends on Mg(2+) as a cofactor.

It localises to the cell inner membrane. The enzyme catalyses UDP-N-acetyl-alpha-D-muramoyl-L-alanyl-gamma-D-glutamyl-meso-2,6-diaminopimeloyl-D-alanyl-D-alanine + di-trans,octa-cis-undecaprenyl phosphate = di-trans,octa-cis-undecaprenyl diphospho-N-acetyl-alpha-D-muramoyl-L-alanyl-D-glutamyl-meso-2,6-diaminopimeloyl-D-alanyl-D-alanine + UMP. Its pathway is cell wall biogenesis; peptidoglycan biosynthesis. Its function is as follows. Catalyzes the initial step of the lipid cycle reactions in the biosynthesis of the cell wall peptidoglycan: transfers peptidoglycan precursor phospho-MurNAc-pentapeptide from UDP-MurNAc-pentapeptide onto the lipid carrier undecaprenyl phosphate, yielding undecaprenyl-pyrophosphoryl-MurNAc-pentapeptide, known as lipid I. In Nitratidesulfovibrio vulgaris (strain ATCC 29579 / DSM 644 / CCUG 34227 / NCIMB 8303 / VKM B-1760 / Hildenborough) (Desulfovibrio vulgaris), this protein is Phospho-N-acetylmuramoyl-pentapeptide-transferase.